Here is a 135-residue protein sequence, read N- to C-terminus: Protein NrdI (135 aa).

It belongs to the NrdI family.

Functionally, probably involved in ribonucleotide reductase function. This Rhizobium johnstonii (strain DSM 114642 / LMG 32736 / 3841) (Rhizobium leguminosarum bv. viciae) protein is Protein NrdI.